The primary structure comprises 472 residues: 4-O-methyl-glucuronoyl methylesterase 1 (472 aa).

The signal sequence occupies residues 1–20; that stretch reads MKSAAYLAALAAVLPAYVNA. The CBM1 domain maps to 21–56; the sequence is QAQEWGQCGGIGWTGATTCVSGTVCTVLNPYYSQCL. A disordered region spans residues 62–97; sequence TAPPPPPPPPTSVSSSSSSSTSSAPPSGPSGTSPTC. Pro residues predominate over residues 63–72; the sequence is APPPPPPPPT. The segment covering 73 to 96 has biased composition (low complexity); it reads SVSSSSSSSTSSAPPSGPSGTSPT. Disulfide bonds link C97-C131, C283-C419, and C315-C391. The GXSYXG catalytic site motif motif lies at 282–287; it reads GCSRDG. Residue S284 is the Nucleophile of the active site. Substrate is bound by residues K288, Q330, E338, and W382. The active-site Proton donor/acceptor is H418. N465 carries N-linked (GlcNAc...) asparagine glycosylation.

This sequence belongs to the carbohydrate esterase 15 (CE15) family.

The protein localises to the secreted. It carries out the reaction a 4-O-methyl-alpha-D-glucuronosyl ester derivative + H2O = 4-O-methyl-alpha-D-glucuronate derivative + an alcohol + H(+). In terms of biological role, glucuronoyl esterase which may play a significant role in biomass degradation, as it is considered to disconnect hemicellulose from lignin through the hydrolysis of the ester bond between 4-O-methyl-D-glucuronic acid residues of glucuronoxylans and aromatic alcohols of lignin. Can hydrolyze benzyl glucuronic acid (BnGlcA), allyl glucuronic acid (allylGlcA) and to a lower degree methyl glucuronic acid (MeGlcA) in vitro. The polypeptide is 4-O-methyl-glucuronoyl methylesterase 1 (Phanerochaete chrysosporium (strain RP-78 / ATCC MYA-4764 / FGSC 9002) (White-rot fungus)).